The primary structure comprises 166 residues: Flagellar protein LafL (166 aa).

A helical membrane pass occupies residues 6–26 (MIAMFIAMIITSALVSAATIM).

The protein belongs to the FliL family.

The protein resides in the cell inner membrane. Functionally, controls the rotational direction of flagella during chemotaxis. The chain is Flagellar protein LafL (lafL) from Vibrio parahaemolyticus serotype O3:K6 (strain RIMD 2210633).